We begin with the raw amino-acid sequence, 564 residues long: Urease subunit alpha (564 aa).

The Urease domain occupies 126–564 (GGIDTHIHFI…LPMAQRYFLF (439 aa)). His-131, His-133, and Lys-214 together coordinate Ni(2+). Lys-214 carries the post-translational modification N6-carboxylysine. A substrate-binding site is contributed by His-216. Residues His-243 and His-269 each contribute to the Ni(2+) site. Residue His-317 is the Proton donor of the active site. Asp-357 contacts Ni(2+).

Belongs to the metallo-dependent hydrolases superfamily. Urease alpha subunit family. As to quaternary structure, heterotrimer of UreA (gamma), UreB (beta) and UreC (alpha) subunits. Three heterotrimers associate to form the active enzyme. Ni cation is required as a cofactor. In terms of processing, carboxylation allows a single lysine to coordinate two nickel ions.

The protein resides in the cytoplasm. The enzyme catalyses urea + 2 H2O + H(+) = hydrogencarbonate + 2 NH4(+). The protein operates within nitrogen metabolism; urea degradation; CO(2) and NH(3) from urea (urease route): step 1/1. This chain is Urease subunit alpha, found in Burkholderia pseudomallei (strain 1710b).